Consider the following 368-residue polypeptide: tRNA-specific 2-thiouridylase MnmA (368 aa).

ATP-binding positions include 11–18 (GMSGGVDS) and Met37. Positions 97–99 (NPD) are interaction with target base in tRNA. The active-site Nucleophile is Cys102. Cysteines 102 and 199 form a disulfide. Position 127 (Gly127) interacts with ATP. The interval 149-151 (KDQ) is interaction with tRNA. Residue Cys199 is the Cysteine persulfide intermediate of the active site. Residues 311–312 (RY) are interaction with tRNA.

It belongs to the MnmA/TRMU family. As to quaternary structure, interacts with TusE.

It localises to the cytoplasm. It carries out the reaction S-sulfanyl-L-cysteinyl-[protein] + uridine(34) in tRNA + AH2 + ATP = 2-thiouridine(34) in tRNA + L-cysteinyl-[protein] + A + AMP + diphosphate + H(+). Functionally, catalyzes the 2-thiolation of uridine at the wobble position (U34) of tRNA(Lys), tRNA(Glu) and tRNA(Gln), leading to the formation of s(2)U34, the first step of tRNA-mnm(5)s(2)U34 synthesis. Sulfur is provided by IscS, via a sulfur-relay system. Binds ATP and its substrate tRNAs. In Escherichia coli O139:H28 (strain E24377A / ETEC), this protein is tRNA-specific 2-thiouridylase MnmA.